The following is a 533-amino-acid chain: Heterogeneous nuclear ribonucleoprotein Q (533 aa).

At Ala-2 the chain carries N-acetylalanine. At Ser-69 the chain carries Phosphoserine. 3 consecutive RRM domains span residues 72-151, 153-235, and 248-318; these read TEIF…ISVA, NRLF…WADP, and KVLF…FAKP. Lys-78 is covalently cross-linked (Glycyl lysine isopeptide (Lys-Gly) (interchain with G-Cter in SUMO2)). The residue at position 131 (Lys-131) is an N6-acetyllysine. Position 273 is an N6-acetyllysine (Lys-273). Residue Tyr-283 is modified to Phosphotyrosine. Positions 310–471 are interaction with APOBEC1; it reads NIEIVFAKPP…GARGGRGGNV (162 aa). Arg-354 carries the post-translational modification Asymmetric dimethylarginine; by PRMT1; alternate. An Omega-N-methylarginine; by PRMT1; alternate modification is found at Arg-354. 6 tandem repeats follow at residues 358 to 360, 361 to 363, 370 to 374, 379 to 382, 388 to 390, and 395 to 398. The segment at 358-469 is 8 X 3 AA repeats of R-G-G; that stretch reads RGGRGGYGYP…VRGARGGRGG (112 aa). A 3 X 4 AA repeats of Y-Y-G-Y region spans residues 370 to 398; the sequence is YYGYEDYYDYYGYDYHNYRGGYEDPYYGY. Position 406 is an omega-N-methylarginine; by PRMT1 (Arg-406). Residues 407 to 533 form a disordered region; the sequence is GRGGRGARGA…YQDTFGQQWK (127 aa). A 1-4 repeat occupies 408–410; sequence RGG. A compositionally biased stretch (low complexity) spans 414 to 432; that stretch reads RGAAPSRGRGAAPPRGRAG. Arg-420 carries the post-translational modification Asymmetric dimethylarginine; by PRMT1. An Asymmetric dimethylarginine; by PRMT1; alternate modification is found at Arg-428. At Arg-428 the chain carries Omega-N-methylarginine; by PRMT1; alternate. Positions 428-459 are interaction with SMN; the sequence is RGRAGYSQRGGPGSARGVRGARGGAQQQRGRG. Position 436 is an asymmetric dimethylarginine; alternate (Arg-436). Omega-N-methylarginine; alternate is present on Arg-436. Residues 436–438 form a 1-5 repeat; the sequence is RGG. 2 positions are modified to asymmetric dimethylarginine; by PRMT1; alternate: Arg-446 and Arg-449. An omega-N-methylarginine; by PRMT1; alternate mark is found at Arg-446 and Arg-449. 3 consecutive repeat copies span residues 449–451, 464–466, and 467–469. Over residues 460 to 472 the composition is skewed to gly residues; it reads VRGARGGRGGNVG. The short motif at 474–488 is the Bipartite nuclear localization signal element; sequence KRKADGYNQPDSKRR. The segment covering 490–505 has biased composition (polar residues); sequence TNNQNWGSQPIAQQPL. Residue Ser-497 is modified to Phosphoserine. Lys-517 participates in a covalent cross-link: Glycyl lysine isopeptide (Lys-Gly) (interchain with G-Cter in SUMO2).

In terms of assembly, identified in a histone pre-mRNA complex, at least composed of ERI1, LSM11, SLBP, SNRPB, SYNCRIP and YBX1. Identified in the spliceosome C complex. Component of the coding region determinant (CRD)-mediated complex, composed of DHX9, HNRNPU, IGF2BP1, SYNCRIP and YBX1. Identified in a mRNP complex, at least composed of DHX9, DDX3X, ELAVL1, HNRNPU, IGF2BP1, ILF3, PABPC1, PCBP2, PTBP2, STAU1, STAU2, SYNCRIP and YBX1. Identified in a mRNP granule complex, at least composed of ACTB, ACTN4, DHX9, ERG, HNRNPA1, HNRNPA2B1, HNRNPAB, HNRNPD, HNRNPL, HNRNPR, HNRNPU, HSPA1, HSPA8, IGF2BP1, ILF2, ILF3, NCBP1, NCL, PABPC1, PABPC4, PABPN1, RPLP0, RPS3, RPS3A, RPS4X, RPS8, RPS9, SYNCRIP, YBX1 and untranslated mRNAs. Component of the APOB mRNA editosome. Interacts with APOBEC1 and A1CF. Part of a complex associated with the FOS mCRD domain and consisting of PABPC1, PAIP1, CSDE1/UNR, HNRPD and SYNCRIP. Interacts with HNRPR, SMN, POLR2A hyperphosphorylated C-terminal domain, minute virus of mice (MVM) NS1 protein and through its C-terminal domain with SYT7, SYT8 and SYT9. The non-phosphorylated and phosphorylated forms are colocalized with PAIP1 in polysomes. Interacts with GTPBP1. Interacts with HABP4. Phosphorylated on tyrosine. The membrane-bound form found in microsomes is phosphorylated in vitro by insulin receptor tyrosine kinase (INSR). Phosphorylation is inhibited upon binding to RNA, whereas the cytoplasmic form is poorly phosphorylated.

The protein localises to the nucleus. The protein resides in the nucleoplasm. It is found in the cytoplasm. It localises to the microsome. Heterogenous nuclear ribonucleoprotein (hnRNP) implicated in mRNA processing mechanisms. Component of the CRD-mediated complex that promotes MYC mRNA stability. Is associated in vitro with pre-mRNA, splicing intermediates and mature mRNA protein complexes. Binds to apoB mRNA AU-rich sequences. Part of the APOB mRNA editosome complex and may modulate the postranscriptional C to U RNA-editing of the APOB mRNA through either by binding to A1CF (APOBEC1 complementation factor), to APOBEC1 or to RNA itself. May be involved in translationally coupled mRNA turnover. Implicated with other RNA-binding proteins in the cytoplasmic deadenylation/translational and decay interplay of the FOS mRNA mediated by the major coding-region determinant of instability (mCRD) domain. Interacts in vitro preferentially with poly(A) and poly(U) RNA sequences. May be involved in cytoplasmic vesicle-based mRNA transport through interaction with synaptotagmins. The chain is Heterogeneous nuclear ribonucleoprotein Q (Syncrip) from Rattus norvegicus (Rat).